We begin with the raw amino-acid sequence, 1088 residues long: Leucine-rich repeat receptor-like protein kinase PEPR2 (1088 aa).

The N-terminal stretch at 1–26 (MRNLGLLEITLLCSLFVYFRIDSVSS) is a signal peptide. Residues 27-739 (LNSDGLALLS…QVKLSTWKIA (713 aa)) are Extracellular-facing. 3 N-linked (GlcNAc...) asparagine glycosylation sites follow: Asn55, Asn82, and Asn122. 26 LRR repeats span residues 75 to 99 (GNVVETLNLSASGLSGQLGSEIGEL), 100 to 122 (KSLVTLDLSLNSFSGLLPSTLGN), 123 to 146 (CTSLEYLDLSNNDFSGEVPDIFGS), 147 to 170 (LQNLTFLYLDRNNLSGLIPASVGG), 172 to 194 (IELVDLRMSYNNLSGTIPELLGN), 195 to 219 (CSKLEYLALNNNKLNGSLPASLYLL), 221 to 243 (NLGELFVSNNSLGGRLHFGSSNC), 244 to 267 (KKLVSLDLSFNDFQGGVPPEIGNC), 269 to 291 (SLHSLVMVKCNLTGTIPSSMGML), 292 to 315 (RKVSVIDLSDNRLSGNIPQELGNC), 316 to 339 (SSLETLKLNDNQLQGEIPPALSKL), 341 to 363 (KLQSLELFFNKLSGEIPIGIWKI), 365 to 387 (SLTQMLVYNNTLTGELPVEVTQL), 388 to 411 (KHLKKLTLFNNGFYGDIPMSLGLN), 412 to 435 (RSLEEVDLLGNRFTGEIPPHLCHG), 436 to 459 (QKLRLFILGSNQLHGKIPASIRQC), 460 to 485 (KTLERVRLEDNKLSGVLPEFPESLSL), 487 to 506 (YVNLGSNSFEGSIPRSLGSC), 507 to 529 (KNLLTIDLSQNKLTGLIPPELGN), 530 to 554 (LQSLGLLNLSHNYLEGPLPSQLSGC), 556 to 577 (RLLYFDVGSNSLNGSIPSSFRS), 578 to 602 (WKSLSTLVLSDNNFLGAIPQFLAEL), 603 to 627 (DRLSDLRIARNAFGGKIPSSVGLLK), 629 to 651 (LRYGLDLSANVFTGEIPTTLGAL), 652 to 676 (INLERLNISNNKLTGPLSVLQSLKS), and 678 to 698 (NQVDVSYNQFTGPIPVNLLSN). 9 N-linked (GlcNAc...) asparagine glycosylation sites follow: Asn149, Asn159, Asn183, Asn194, Asn209, Asn229, Asn266, Asn279, and Asn314. Residues Asn373 and Asn411 are each glycosylated (N-linked (GlcNAc...) asparagine). N-linked (GlcNAc...) asparagine glycosylation is found at Asn537 and Asn568. Residues Asn658 and Asn698 are each glycosylated (N-linked (GlcNAc...) asparagine). Residues 740-760 (LIAAGSSLSVLALLFALFLVL) traverse the membrane as a helical segment. At 761-1088 (CRCKRGTKTE…FVRSTSGSVH (328 aa)) the chain is on the cytoplasmic side. The residue at position 791 (Thr791) is a Phosphothreonine. The Protein kinase domain maps to 794 to 1080 (LDDKYIIGRG…KDLTDLESFV (287 aa)). ATP-binding positions include 800 to 808 (IGRGAHGVV) and Lys822. A phosphotyrosine mark is found at Tyr868 and Tyr908. Residue Asp921 is the Proton acceptor of the active site. 2 positions are modified to phosphotyrosine: Tyr962 and Tyr969.

Belongs to the protein kinase superfamily. Ser/Thr protein kinase family. In terms of assembly, interacts with BAK1. Interacts with CLE14.

The protein localises to the cell membrane. It carries out the reaction L-seryl-[protein] + ATP = O-phospho-L-seryl-[protein] + ADP + H(+). The enzyme catalyses L-threonyl-[protein] + ATP = O-phospho-L-threonyl-[protein] + ADP + H(+). Acts as a receptor for PEP defense peptides. Unlike typical immune receptors, senses an endogenous elicitor that potentiates PAMP-inducible plant responses. The polypeptide is Leucine-rich repeat receptor-like protein kinase PEPR2 (PEPR2) (Arabidopsis thaliana (Mouse-ear cress)).